Reading from the N-terminus, the 132-residue chain is Small ribosomal subunit protein uS8 (132 aa).

The protein belongs to the universal ribosomal protein uS8 family. Part of the 30S ribosomal subunit. Contacts proteins S5 and S12.

In terms of biological role, one of the primary rRNA binding proteins, it binds directly to 16S rRNA central domain where it helps coordinate assembly of the platform of the 30S subunit. The protein is Small ribosomal subunit protein uS8 of Heliobacterium modesticaldum (strain ATCC 51547 / Ice1).